Reading from the N-terminus, the 329-residue chain is Stimulator of interferon genes protein (329 aa).

Residues 1–4 are Cytoplasmic-facing; that stretch reads MACV. A helical membrane pass occupies residues 5–25; sequence LAIGSILFVWILGKGKYSGAQ. Residue Leu26 is a topological domain, lumenal. Residues 27 to 52 traverse the membrane as a helical segment; it reads IYRMATNFAISQGCCLVTCACELTEE. The Cytoplasmic portion of the chain corresponds to 53–74; the sequence is IKHLHTRYNGHYWRALKASFNL. A helical membrane pass occupies residues 75–88; that stretch reads SCAAFVTAILCYVF. At 89–98 the chain is on the lumenal side; that stretch reads YEPKLMASLP. Residues 99–116 form a helical membrane-spanning segment; it reads LTIDITLTLLSWLFCWIL. Over 117–329 the chain is Cytoplasmic; the sequence is GIQGPTPATI…QQHSEEYSML (213 aa). Positions 135-325 are cyclic dinucleotide-binding domain (CBD); it reads LNVAHGLAWS…KHIRQQHSEE (191 aa). Residues Ser144, Tyr149, Arg220, and Thr245 each coordinate 2',3'-cGAMP. Residues Ser144, Tyr149, 220–223, and Thr245 each bind 3',3'-c-di-GMP; that span reads RVFK.

The protein belongs to the STING family. Homodimer; forms a homodimer in absence of cyclic nucleotide (c-di-GMP or cGAMP). Homotetramer; in presence of cyclic nucleotide (c-di-GMP or cGAMP), forms tetramers and higher-order oligomers through side-by-side packing.

The protein localises to the endoplasmic reticulum membrane. It is found in the cytoplasm. The protein resides in the perinuclear region. Its subcellular location is the endoplasmic reticulum-Golgi intermediate compartment membrane. It localises to the golgi apparatus membrane. The protein localises to the cytoplasmic vesicle. It is found in the autophagosome membrane. The catalysed reaction is H(+)(in) = H(+)(out). Its function is as follows. Sensor of cytosolic DNA from bacteria and viruses that promotes autophagy. Acts by recognizing and binding cyclic GMP-AMP (cGAMP), a messenger produced by CGAS in response to DNA in the cytosol. Exhibits guanine base-specific ligand recognition: binds 3'-3'linked cGAMP, 2'-3' linked cGAMP and 3'-3' linked c-di-GMP with much greater affinity as compared to 3'-3' linked c-di-AMP. Following cGAMP-binding, promotes the formation of autophagosomes, leading to target cytosolic DNA for degradation by the lysosome. Promotes autophagy by acting as a proton channel that directs proton efflux from the Golgi to facilitate LC3 lipidation. Lacks the C-terminal tail (CTT) found in other vertebrate orthologs which is essential for interferon signaling. In Xenopus tropicalis (Western clawed frog), this protein is Stimulator of interferon genes protein.